We begin with the raw amino-acid sequence, 163 residues long: MRCPFCAHPEDKVVDSRESKEGESIRRRRECLKCEKRFTTYERIDEIPYMVVKKDGRRERFDRQKVLNGLMRACEKRPVSIGKLEAIVNEAETFVIDSPERERRTSEIGQLIMEHLKKYDKVAYVRFASVYLDFKDVREFLSELQDLLNHKDPAAVATVKPIK.

The segment at 3-34 (CPFCAHPEDKVVDSRESKEGESIRRRRECLKC) is a zinc-finger region. The ATP-cone domain maps to 49–139 (YMVVKKDGRR…VYLDFKDVRE (91 aa)).

This sequence belongs to the NrdR family. Zn(2+) is required as a cofactor.

Negatively regulates transcription of bacterial ribonucleotide reductase nrd genes and operons by binding to NrdR-boxes. The chain is Transcriptional repressor NrdR from Koribacter versatilis (strain Ellin345).